The following is a 216-amino-acid chain: Superoxide dismutase [Cu-Zn] 2, chloroplastic (216 aa).

The transit peptide at 1-62 (MAATNTILAF…APSKALTVVS (62 aa)) directs the protein to the chloroplast. Positions 108, 110, and 125 each coordinate Cu cation. Cys-119 and Cys-208 are disulfide-bonded. The Zn(2+) site is built by His-125, His-133, His-142, and Asp-145. Residue His-182 participates in Cu cation binding.

Belongs to the Cu-Zn superoxide dismutase family. As to quaternary structure, homotetramer. Requires Cu cation as cofactor. Zn(2+) is required as a cofactor. As to expression, expressed in leaves (at protein level). The spatial localization is regulated by miR398-mediated silencing. Mostly present in flowers, old rosette leaves and inflorescence, and, to a lower extent, in cauline leaves, stems and roots.

It localises to the plastid. Its subcellular location is the chloroplast. The enzyme catalyses 2 superoxide + 2 H(+) = H2O2 + O2. Functionally, destroys radicals which are normally produced within the cells and which are toxic to biological systems. Mediates tolerance to stress, including photo-oxidative stress. The chain is Superoxide dismutase [Cu-Zn] 2, chloroplastic (CSD2) from Arabidopsis thaliana (Mouse-ear cress).